The primary structure comprises 1423 residues: ABC transporter G family member 40 (1423 aa).

Residues 1–19 (MEGTSFHQASNSMRRNSSV) are compositionally biased toward polar residues. Positions 1–36 (MEGTSFHQASNSMRRNSSVWKKDSGREIFSRSSREE) are disordered. N-linked (GlcNAc...) asparagine glycosylation occurs at Asn-16. Residues 20–34 (WKKDSGREIFSRSSR) are compositionally biased toward basic and acidic residues. Positions 154–427 (LNTLHLVPNR…FETMGFKCPP (274 aa)) constitute an ABC transporter 1 domain. Position 187–194 (187–194 (GPPSSGKT)) interacts with ATP. A glycan (N-linked (GlcNAc...) asparagine) is linked at Asn-376. An ABC transmembrane type-2 1 domain is found at 505-718 (ELVKTSFSRE…GQNAILANEF (214 aa)). 6 consecutive transmembrane segments (helical) span residues 523-543 (FVYY…MTLF), 562-582 (ALFF…SMTI), 611-631 (IPIS…VIGF), 643-663 (ILLV…AALG), 667-687 (IVAN…GGVV), and 696-716 (WWIW…ILAN). Residue Asn-729 is glycosylated (N-linked (GlcNAc...) asparagine). A helical membrane pass occupies residues 756 to 776 (GALLGFVVLFNFGFTLALTFL). The ABC transporter 2 domain maps to 825 to 1077 (ITFDNVVYSV…HLINYFESIQ (253 aa)). 870-877 (GVSGAGKT) serves as a coordination point for ATP. N-linked (GlcNAc...) asparagine glycosylation occurs at Asn-895. Thr-962 is subject to Phosphothreonine. In terms of domain architecture, ABC transmembrane type-2 2 spans 1150-1364 (TQCMASLWKQ…TLYGLIASQF (215 aa)). Helical transmembrane passes span 1174 to 1194 (FLFT…LGGK), 1207 to 1227 (SMYT…QPVV), 1257 to 1277 (IPYV…MIGF), 1284 to 1304 (FFWY…YGMM), 1314 to 1334 (IASV…GFLI), and 1341 to 1361 (VWWE…GLIA). The N-linked (GlcNAc...) asparagine glycan is linked to Asn-1375. A helical transmembrane segment spans residues 1395 to 1415 (VVAAMNVIFPLLFAVIFAIGI).

It belongs to the ABC transporter superfamily. ABCG family. PDR (TC 3.A.1.205) subfamily. Interacts with LECRK91 and LECRK92. Mostly observed in inflorescence meristems relative to cauline leaves and developing siliques. Ubiquitous with higher levels in leaves, stems and flowers. Also present in primary and lateral roots. In seeds, mainly expressed in the embryo and, to a lesser extent, in the endosperm.

The protein localises to the cell membrane. It catalyses the reaction abscisate(out) + ATP + H2O = abscisate(in) + ADP + phosphate + H(+). Its activity is regulated as follows. Inhibited by glibenclamide, verapamil and vanadate (ABC transporters inhibitors). Its function is as follows. High affinity abscisic acid (ABA) transporter that mediates the import of ABA, with a preference for (+)-ABA, through the plasma membrane, especially in guard cells, and is involved in the intercellular and intracellular ABA signaling pathways leading, for example, to stomatal closure, thus conferring drought tolerance. Together with ABCG30, import into the embryo the ABA delivered from the endosperm via ABCG25 and ABCG31-mediated export to suppress radicle extension and subsequent embryonic growth. May be a general defense protein. Functions as a pump to exclude Pb(2+) ions and/or Pb(2+)-containing toxic compounds from the cytoplasm. Contributes to Pb(2+) ions resistance. Confers some resistance to the terpene sclareol. In terms of biological role, (Microbial infection) Involved in resistance response to the pathogenic oomycetes Phytophthora infestans and Phytophthora capsici. The polypeptide is ABC transporter G family member 40 (Arabidopsis thaliana (Mouse-ear cress)).